The chain runs to 1374 residues: MVSLRDNIESQPLSHNRRVRKNFGHINLVADIPNLIEIQKNSYERNFLQLNIKDSERKNKGLQSILNSIFPISDSSNIANLEFVKYEFDTPKYDVDECSQRSLSYAAPLKVTLRLSIWDIDEDTGTREIKGIKEQEVYMGDIPLMTKNGTFIINGTERVVVSQMHRSPGVFFYHDEGKVHSSGKLLYSARVIPYRGSWLDFEFDAKDVIYFRIDRKRKLYATTLLRAIGMNTEEIMKFYYNSVTYKCIKNKGWSVKFIPQHITAHRLTSDLVDADTGNVLLKAGQKITPRLAQKYFSIGLNNILVTHETLIGKYLSEDLRDPESDEILAKIGEMITADMLQVINDLKIKNVNVLVINPQSGPYIRNTLFADKNQDRETALCDIFRVLRPGEPANIEAAESLFYNLFFDAERYDLSEVGRIKMNSRLELNISEEITVLTIDDIKNIVRILVELKDGKGIIDDIDHLGNRRVRSVGELIENQFRIGLVRIEKSVIERMSAGDVDTVMPHDLVNSKILVSVVKEFFSTSQLSQFMDQTNPLSEITHKRRLSALGPGGLSRDRAGFEVRDVHPTHYGRICPIETPEGQNIGLINSMATYARINKHGFIESPYRRVKDGYVTDEVVYLSAIEEGKYKIGQANSKVDQDGKLQGEFINCRVEGGNFVMVEPYEVDFIDVTPMQVVSVAASLIPFLENDDANRALMGSNMQRQAVPLIKTEAPFVGTGVEGVVAKDSGASVLALHDGIVERVDSNRIVIRTLEQKVDGSPSVDIYNLLKFQKSNHNTCINQKPLVKVGHYVKKNDIIADGPSTDNGEIALGRNVLVAFLPWNGYNFEDSILISERIVKEDVFTSIHIEEFEVIARDTRLGPEEITRDIPNVSEEALRHLDEVGIIYVGAEVKAGDILVGKVTPKSESPITPEEKLLRAIFGEKAFDVKDSSLHVPSGVSGTVVEVRIFSRRGVEKDQRAIAIEKQQIEKLAKDRDDELEIIEHFVFSWLEKLLVGHVIISGPKQITAGQTITTEMLKGLSKGQLWQLIVEDANVMNEIEQIKIHYDEKKHALDKRFATKVEKLQSGDDLPQGALKVVKVFIATKHKLQPGDKMAGRHGNKGVISRIVPEEDMPFLEDGTVVDIVLNPLGLPSRMNIGQILETHLGWASINLAKKISTLVKEYKDNNIDIEQIKKFLLELYGKDINYILEGSEEGIISFCNKVSKGVYFATPVFDGAKVQDVKDMLKLADQDLSGQVKLIDGRTGEYFDRLVTVGHKYLLKLHHLVDNKIHSRSIGPYSLVTQQPLGGKSHFGGQRFGEMECWALQAYGAAYTLQEMLTVKSDDVNGRIKTYDSIVRGENNFESGIPESFNVMIKEFRSLCLNVKLEVTASK.

The protein belongs to the RNA polymerase beta chain family. In terms of assembly, the RNAP catalytic core consists of 2 alpha, 1 beta, 1 beta' and 1 omega subunit. When a sigma factor is associated with the core the holoenzyme is formed, which can initiate transcription.

It carries out the reaction RNA(n) + a ribonucleoside 5'-triphosphate = RNA(n+1) + diphosphate. Its function is as follows. DNA-dependent RNA polymerase catalyzes the transcription of DNA into RNA using the four ribonucleoside triphosphates as substrates. This Rickettsia typhi (strain ATCC VR-144 / Wilmington) protein is DNA-directed RNA polymerase subunit beta.